A 1849-amino-acid polypeptide reads, in one-letter code: Mitogen-activated protein kinase kinase kinase mkh1 (1849 aa).

The Protein kinase domain maps to 1556 to 1825 (WFKGQLIGKG…TKLLAEHPFC (270 aa)). ATP-binding positions include 1562-1570 (IGKGTYGRV) and Lys-1585. The active-site Proton acceptor is Asp-1686.

This sequence belongs to the protein kinase superfamily. STE Ser/Thr protein kinase family. MAP kinase kinase kinase subfamily.

It carries out the reaction L-seryl-[protein] + ATP = O-phospho-L-seryl-[protein] + ADP + H(+). It catalyses the reaction L-threonyl-[protein] + ATP = O-phospho-L-threonyl-[protein] + ADP + H(+). In terms of biological role, mitogen-activated protein kinase kinase kinase, part of the mkh1-mkk1-spm1 MAPK cascade that regulates vegetative growth, conidial formation, colony surface hydrophobicity, osmotic stress, cell wall integrity maintenance, carbon and nitrogen source utilization, chitin distribution, septa formation, and pathogenicity. The protein is Mitogen-activated protein kinase kinase kinase mkh1 of Cytospora mali (Apple Valsa canker fungus).